A 464-amino-acid chain; its full sequence is Neuronal acetylcholine receptor subunit beta-3 (464 aa).

The N-terminal stretch at 1 to 30 is a signal peptide; it reads MTGFLRVFLVLSATLSGSWVTLTATAGLSS. Residues 31–238 lie on the Extracellular side of the membrane; that stretch reads VAEHEDALLR…VTYSFVLRRL (208 aa). 2 N-linked (GlcNAc...) asparagine glycosylation sites follow: N55 and N172. A disulfide bridge links C159 with C173. 3 helical membrane passes run 239-263, 271-288, and 305-326; these read PLFY…VFYL, LSLS…LLVI, and YLLF…VINV. Residues 327-434 are Cytoplasmic-facing; that stretch reads HHRSSSTYHP…WKFVAQVLDR (108 aa). A helical membrane pass occupies residues 435-453; the sequence is IFLWLFLIASVLGSILIFI.

It belongs to the ligand-gated ion channel (TC 1.A.9) family. Acetylcholine receptor (TC 1.A.9.1) subfamily. Beta-3/CHRNB3 sub-subfamily. As to quaternary structure, neuronal AChR seems to be composed of two different type of subunits: alpha and beta. CHRNB3/beta-3 subunit is only able to form functional nAChRs when co-assembled with another beta subunit. Participates in pentameric assemblies along with CHRNA4/alpha-4 and CHRNB2/beta-2 subunits and with CHRNA6/alpha-6 as well, forming stoichiometries such as (CHRNA3:CHRNB4)2:CHRNB3, (CHRNA4:CHRNB2)2:CHRNB3 or (CHRNA6:CHRNB2)2:CHRNB3.

It is found in the synaptic cell membrane. It localises to the cell membrane. It carries out the reaction Ca(2+)(in) = Ca(2+)(out). The enzyme catalyses K(+)(in) = K(+)(out). The catalysed reaction is Na(+)(in) = Na(+)(out). Its activity is regulated as follows. Activated by a myriad of ligands such as acetylcholine, cytisine, nicotine, choline and epibatidine. Component of neuronal acetylcholine receptors (nAChRs) that function as pentameric, ligand-gated cation channels with high calcium permeability among other activities. nAChRs are excitatory neurotrasnmitter receptors formed by a collection of nAChR subunits known to mediate synaptic transmission in the nervous system and the neuromuscular junction. Each nAchR subunit confers differential attributes to channel properties, including activation, deactivation and desensitization kinetics, pH sensitivity, cation permeability, and binding to allosteric modulators. Has an accessory rather than functional role and is only able to form functional nAChRs when co-assembled with another beta subunit. Participates in pentameric assemblies along with CHRNA3, CHRNA4, CHRNA6, CHRNB2 and CHRNB4. Modulates receptor assembly and increases receptor sensitivity to nicotine when associated with CHRNB2, CHRNA4 and/or CHRNA6 as well as CHRNA3 and CHRNB4. Seems to play a role in nicotine addiction. In Rattus norvegicus (Rat), this protein is Neuronal acetylcholine receptor subunit beta-3 (Chrnb3).